Reading from the N-terminus, the 641-residue chain is Calpain-6 (641 aa).

Residues 26 to 343 enclose the Calpain catalytic domain; it reads LFCDPTFLPE…FHKLNVCRNV (318 aa). A domain III region spans residues 344 to 495; it reads NNPIFGRKEL…IFSEVPVQLR (152 aa). In terms of domain architecture, C2 spans 498-621; that stretch reads TLDMPKMSCW…YLRKKGGPTA (124 aa).

This sequence belongs to the peptidase C2 family. Interacts (via domain III) with microtubules. Interacts (via domain II) with ARHGEF2 (via the N-terminal zinc finger). In terms of tissue distribution, expressed only in placenta.

Its subcellular location is the cytoplasm. It is found in the perinuclear region. The protein resides in the cytoskeleton. The protein localises to the spindle. Its function is as follows. Microtubule-stabilizing protein that may be involved in the regulation of microtubule dynamics and cytoskeletal organization. May act as a regulator of RAC1 activity through interaction with ARHGEF2 to control lamellipodial formation and cell mobility. Does not seem to have protease activity as it has lost the active site residues. The polypeptide is Calpain-6 (CAPN6) (Homo sapiens (Human)).